A 235-amino-acid polypeptide reads, in one-letter code: Large ribosomal subunit protein uL1 (235 aa).

Belongs to the universal ribosomal protein uL1 family. In terms of assembly, part of the 50S ribosomal subunit.

Its function is as follows. Binds directly to 23S rRNA. The L1 stalk is quite mobile in the ribosome, and is involved in E site tRNA release. Protein L1 is also a translational repressor protein, it controls the translation of the L11 operon by binding to its mRNA. This is Large ribosomal subunit protein uL1 from Synechococcus sp. (strain CC9605).